The chain runs to 231 residues: GTP cyclohydrolase III (231 aa).

This sequence belongs to the archaeal-type GTP cyclohydrolase family.

The enzyme catalyses GTP + 3 H2O = 2-amino-5-formylamino-6-(5-phospho-D-ribosylamino)pyrimidin-4(3H)-one + 2 phosphate + 2 H(+). In terms of biological role, catalyzes the formation of 2-amino-5-formylamino-6-ribofuranosylamino-4(3H)-pyrimidinone ribonucleotide monophosphate and inorganic phosphate from GTP. Also has an independent pyrophosphate phosphohydrolase activity. This Saccharolobus solfataricus (strain ATCC 35092 / DSM 1617 / JCM 11322 / P2) (Sulfolobus solfataricus) protein is GTP cyclohydrolase III.